The chain runs to 585 residues: Cytochrome c lysine N-methyltransferase 1 (585 aa).

Residues 18–273 (KSLSLKPSTI…KPIEVFISYS (256 aa)) form the SET domain. The SET-like stretch occupies residues 186–288 (LNLSDIKHLY…FSMLVTYGFT (103 aa)).

It belongs to the class V-like SAM-binding methyltransferase superfamily.

The protein resides in the cytoplasm. It localises to the cytosol. The enzyme catalyses L-lysyl-[cytochrome c] + S-adenosyl-L-methionine = N(6)-methyl-L-lysyl-[cytochrome c] + S-adenosyl-L-homocysteine + H(+). In terms of biological role, methyltransferase which mediates trimethylation of 'Lys-78' of cytochrome c (CYC1). This chain is Cytochrome c lysine N-methyltransferase 1 (CTM1), found in Saccharomyces cerevisiae (strain ATCC 204508 / S288c) (Baker's yeast).